The following is a 440-amino-acid chain: Chromosome partition protein MukF (440 aa).

The interval 208–236 (LSETSGTLRELQDTLEAAGDKLQANLLRI) is leucine-zipper.

This sequence belongs to the MukF family. As to quaternary structure, interacts, and probably forms a ternary complex, with MukE and MukB via its C-terminal region. The complex formation is stimulated by calcium or magnesium. It is required for an interaction between MukE and MukB.

It localises to the cytoplasm. The protein localises to the nucleoid. Its function is as follows. Involved in chromosome condensation, segregation and cell cycle progression. May participate in facilitating chromosome segregation by condensation DNA from both sides of a centrally located replisome during cell division. Not required for mini-F plasmid partitioning. Probably acts via its interaction with MukB and MukE. Overexpression results in anucleate cells. It has a calcium binding activity. The polypeptide is Chromosome partition protein MukF (Escherichia coli O17:K52:H18 (strain UMN026 / ExPEC)).